A 1439-amino-acid polypeptide reads, in one-letter code: Histone-lysine N-methyltransferase NSD3 (1439 aa).

The disordered stretch occupies residues 121–151 (PHEILEKPSPPQPPPPPSVPQTVIPKKTGSP). Over residues 128–139 (PSPPQPPPPPSV) the composition is skewed to pro residues. A Phosphoserine modification is found at Ser-150. Positions 154-157 (KLKI) match the KIKL motif. The disordered stretch occupies residues 181-247 (QASEHTKSKH…PREEPVLKEA (67 aa)). Basic residues predominate over residues 187-201 (KSKHESRKEKRKKSN). The segment covering 202 to 244 (RHESSRSEERRSHKIPKLEPEGQNRPNERVDTAPEKPREEPVL) has biased composition (basic and acidic residues). Glycyl lysine isopeptide (Lys-Gly) (interchain with G-Cter in SUMO2) cross-links involve residues Lys-218 and Lys-245. In terms of domain architecture, PWWP 1 spans 270-333 (VGDLVWSKVG…EKRVREYKGH (64 aa)). Disordered regions lie at residues 344-367 (AKQA…ERAQ) and 401-466 (EASS…PPPV). 2 stretches are compositionally biased toward polar residues: residues 401–413 (EASS…VTSK) and 425–445 (VLNS…QSST). Residue Lys-413 forms a Glycyl lysine isopeptide (Lys-Gly) (interchain with G-Cter in SUMO2) linkage. Ser-457 is subject to Phosphoserine. Residues Lys-502 and Lys-532 each participate in a glycyl lysine isopeptide (Lys-Gly) (interchain with G-Cter in SUMO2) cross-link. The segment at 540-695 (QDRLIISSPS…VDSSLSRRGV (156 aa)) is disordered. Over residues 546–568 (SSPSQRSEKPAQSASSPEATSGS) the composition is skewed to polar residues. Residues 583–595 (TRSESEKSAEVVP) are compositionally biased toward basic and acidic residues. Phosphoserine occurs at positions 585, 587, and 590. Residue Lys-628 forms a Glycyl lysine isopeptide (Lys-Gly) (interchain with G-Cter in SUMO2) linkage. The segment covering 637–648 (STDVETASCTYR) has biased composition (polar residues). Residue Ser-655 is modified to Phosphoserine. Residues 670–691 (DSPSATADADASDAQSVDSSLS) show a composition bias toward low complexity. 3 PHD-type zinc fingers span residues 701-748 (DTVC…CETG), 749-805 (QHPC…CSME), and 862-955 (VGFC…CKAG). Lys-790 carries the N6-acetyllysine modification. The PWWP 2 domain occupies 960–1025 (YKQIVWVKLG…QGRVFPYVEG (66 aa)). Positions 1036–1065 (INKTFKKALEEAAKRFQELKAQRESKEALE) form a coiled coil. The region spanning 1096 to 1146 (SEIPRCNCKPGDENPCGLESQCLNRMSQYECHPQVCPAGDRCQNQCFTKRL) is the AWS domain. Residues 1148-1265 (PDAEVIKTER…AGMELTFNYN (118 aa)) enclose the SET domain. A Glycyl lysine isopeptide (Lys-Gly) (interchain with G-Cter in SUMO2) cross-link involves residue Lys-1154. A Post-SET domain is found at 1272 to 1288 (GRTVCHCGADNCSGFLG). The segment at 1323–1370 (EDYCFQCGDGGELVMCDKKDCPKAYHLLCLNLTQPPHGKWECPWHRCD) adopts a PHD-type 4; atypical zinc-finger fold.

The protein belongs to the class V-like SAM-binding methyltransferase superfamily. Histone-lysine methyltransferase family. SET2 subfamily. As to quaternary structure, interacts with BRD4. Interacts (via KIKL motif) with BRD3 (via NET domain).

The protein localises to the nucleus. Its subcellular location is the chromosome. The enzyme catalyses L-lysyl(4)-[histone H3] + 2 S-adenosyl-L-methionine = N(6),N(6)-dimethyl-L-lysyl(4)-[histone H3] + 2 S-adenosyl-L-homocysteine + 2 H(+). It catalyses the reaction L-lysyl(27)-[histone H3] + 2 S-adenosyl-L-methionine = N(6),N(6)-dimethyl-L-lysyl(27)-[histone H3] + 2 S-adenosyl-L-homocysteine + 2 H(+). Its function is as follows. Histone methyltransferase. Preferentially dimethylates 'Lys-4' and 'Lys-27' of histone H3 forming H3K4me2 and H3K27me2. H3 'Lys-4' methylation represents a specific tag for epigenetic transcriptional activation, while 'Lys-27' is a mark for transcriptional repression. This is Histone-lysine N-methyltransferase NSD3 (Nsd3) from Mus musculus (Mouse).